A 571-amino-acid polypeptide reads, in one-letter code: MASVAAWLPFARAAAIGWVPIATHPLPPPPMPKDRRKTDDEKLLINVSGRRFETWRNTLEKYPDTLLGSNEREFFYDEDCKEYFFDRDPDIFRHILNYYRTGKLHYPKHECLTSYDEELAFFGIMPDVIGDCCYEDYRDRKRENAERLMDDKLSENGDQNLQQLTNMRQKMWRAFENPHTSTSALVFYYVTGFFIAVSVMANVVETVPCGHRPGRAGTLPCGERYKIVFFCLDTACVMIFTAEYLLRLFAAPDRCKFVRSVMSIIDVVAIMPYYIGLGITDNDDVSGAFVTLRVFRVFRIFKFSRHSQGLRILGYTLKSCASELGFLVFSLAMAIIIFATVMFYAEKNVNGTNFTSIPAAFWYTIVTMTTLGYGDMVPETIAGKIVGGVCSLSGVLVIALPVPVIVSNFSRIYHQNQRADKRKAQRKARLARIRIAKASSGAAFVSKKKAAEARWAAQESGIELDDNYRDEDIFELQHHHLLRCLEKTTDREFVELEIPFNGQPKRPGSPSPMASPAHSTNSAAGLLQSCCGRCCSQRYQACGKYMPAASNAQNSQNNQPMDGTYLVEASF.

Residue N46 is glycosylated (N-linked (GlcNAc...) asparagine). A helical membrane pass occupies residues 186-204; it reads VFYYVTGFFIAVSVMANVV. The helical transmembrane segment at 229–250 threads the bilayer; that stretch reads FFCLDTACVMIFTAEYLLRLFA. A helical membrane pass occupies residues 261–282; sequence VMSIIDVVAIMPYYIGLGITDN. Residues 290-308 traverse the membrane as a helical segment; it reads VTLRVFRVFRIFKFSRHSQ. Residues 324-345 form a helical membrane-spanning segment; that stretch reads LGFLVFSLAMAIIIFATVMFYA. N350 and N353 each carry an N-linked (GlcNAc...) asparagine glycan. A Selectivity filter motif is present at residues 370–375; it reads TLGYGD. Residues 385 to 406 form a helical membrane-spanning segment; the sequence is IVGGVCSLSGVLVIALPVPVIV. A glycan (N-linked (GlcNAc...) asparagine) is linked at N408. The segment at 474–489 is mediates dendritic targeting; sequence FELQHHHLLRCLEKTT. Residues 500–520 form a disordered region; that stretch reads FNGQPKRPGSPSPMASPAHST.

Belongs to the potassium channel family. D (Shal) (TC 1.A.1.2) subfamily. Shal sub-subfamily. In terms of assembly, heterotetramer of potassium channel proteins. Interacts (via C-terminal dendritic targeting motif) with SIDL. As to expression, co-expressed with SIDL in the nervous system.

It is found in the membrane. The protein resides in the cell projection. Its subcellular location is the dendrite. The protein localises to the perikaryon. Mediates the voltage-dependent potassium ion permeability of excitable membranes. Assuming opened or closed conformations in response to the voltage difference across the membrane, the protein forms a potassium-selective channel through which potassium ions may pass in accordance with their electrochemical gradient. May play a role in the nervous system and in the regulation of beating frequency in pacemaker cells. This Drosophila melanogaster (Fruit fly) protein is Potassium voltage-gated channel protein Shal (Shal).